Here is a 400-residue protein sequence, read N- to C-terminus: Probable splicing factor YJU2B (400 aa).

Positions 1-26 (MGERKGVNKYYPPDFNPEKHGSLNRY) are disordered. Position 40 is a phosphoserine (S40). Positions 182 to 214 (LNSMLRKRFREKKKAMQEEEERDQALQAKASLA) form a coiled coil. Residues 255–400 (WFPSTPGASA…VADYSGSESE (146 aa)) are disordered. A compositionally biased stretch (polar residues) spans 283 to 292 (RRATPTSSPV). At S310 the chain carries Phosphoserine. Polar residues predominate over residues 327-341 (EGTNQNRPVSPQDCS). The segment covering 364 to 380 (PQPPPDTSPEAPNPQDT) has biased composition (pro residues).

The protein belongs to the CWC16 family.

It localises to the nucleus. May be involved in mRNA splicing. This Bos taurus (Bovine) protein is Probable splicing factor YJU2B (YJU2B).